We begin with the raw amino-acid sequence, 501 residues long: Trans-cinnamate 4-monooxygenase (501 aa).

The chain crosses the membrane as a helical span at residues 3-23 (LVLLEKALLGLFAAAVLAVAV). (E)-cinnamate is bound by residues 213 to 218 (RSRLSQ) and alanine 302. Cysteine 443 contributes to the heme binding site.

It belongs to the cytochrome P450 family. The cofactor is heme.

Its subcellular location is the membrane. It catalyses the reaction (E)-cinnamate + reduced [NADPH--hemoprotein reductase] + O2 = (E)-4-coumarate + oxidized [NADPH--hemoprotein reductase] + H2O + H(+). Its pathway is phenylpropanoid metabolism; trans-4-coumarate biosynthesis; trans-4-coumarate from trans-cinnamate: step 1/1. In terms of biological role, catalyzes the first oxidative step of the phenylpropanoid pathway in higher plants by transforming trans-cinnamate into p-coumarate. The compounds formed by this pathway are essential components for lignification, pollination, and defense against ultraviolet light, predators and pathogens. Can also use 2-naphthoic acid as substrate. This Sorghum bicolor (Sorghum) protein is Trans-cinnamate 4-monooxygenase.